Reading from the N-terminus, the 306-residue chain is Pyridoxal 5'-phosphate synthase subunit SNZERR (306 aa).

Aspartate 34 is a D-ribose 5-phosphate binding site. The Schiff-base intermediate with D-ribose 5-phosphate role is filled by lysine 91. Residue glycine 163 participates in D-ribose 5-phosphate binding. Residue arginine 175 coordinates D-glyceraldehyde 3-phosphate. D-ribose 5-phosphate contacts are provided by residues glycine 224 and 245–246; that span reads GS.

Belongs to the PdxS/SNZ family.

The enzyme catalyses aldehydo-D-ribose 5-phosphate + D-glyceraldehyde 3-phosphate + L-glutamine = pyridoxal 5'-phosphate + L-glutamate + phosphate + 3 H2O + H(+). It functions in the pathway cofactor biosynthesis; pyridoxal 5'-phosphate biosynthesis. In terms of biological role, catalyzes the formation of pyridoxal 5'-phosphate from ribose 5-phosphate (RBP), glyceraldehyde 3-phosphate (G3P) and ammonia. The ammonia is provided by PDX2. Can also use ribulose 5-phosphate and dihydroxyacetone phosphate as substrates, resulting from enzyme-catalyzed isomerization of RBP and G3P, respectively. Also plays an indirect role in resistance to singlet oxygen-generating photosensitizers. This is Pyridoxal 5'-phosphate synthase subunit SNZERR (SNZERR) from Suberites domuncula (Sponge).